Reading from the N-terminus, the 279-residue chain is NADPH-dependent 7-cyano-7-deazaguanine reductase (279 aa).

Position 86–88 (86–88 (VES)) interacts with substrate. 88-89 (SK) serves as a coordination point for NADPH. The active-site Thioimide intermediate is C187. The active-site Proton donor is D194. Position 226 to 227 (226 to 227 (HE)) interacts with substrate. Residue 255–256 (RG) participates in NADPH binding.

This sequence belongs to the GTP cyclohydrolase I family. QueF type 2 subfamily. In terms of assembly, homodimer.

The protein resides in the cytoplasm. The catalysed reaction is 7-aminomethyl-7-carbaguanine + 2 NADP(+) = 7-cyano-7-deazaguanine + 2 NADPH + 3 H(+). It participates in tRNA modification; tRNA-queuosine biosynthesis. Catalyzes the NADPH-dependent reduction of 7-cyano-7-deazaguanine (preQ0) to 7-aminomethyl-7-deazaguanine (preQ1). In Actinobacillus succinogenes (strain ATCC 55618 / DSM 22257 / CCUG 43843 / 130Z), this protein is NADPH-dependent 7-cyano-7-deazaguanine reductase.